The sequence spans 202 residues: Small ribosomal subunit protein uS4c (202 aa).

Residues 90-158 (MRLDNIIFRL…MKRSRDSYEK (69 aa)) form the S4 RNA-binding domain.

The protein belongs to the universal ribosomal protein uS4 family. As to quaternary structure, part of the 30S ribosomal subunit. Contacts protein S5. The interaction surface between S4 and S5 is involved in control of translational fidelity.

The protein resides in the plastid. Its subcellular location is the chloroplast. Its function is as follows. One of the primary rRNA binding proteins, it binds directly to 16S rRNA where it nucleates assembly of the body of the 30S subunit. With S5 and S12 plays an important role in translational accuracy. The chain is Small ribosomal subunit protein uS4c (rps4) from Anthoceros angustus (Hornwort).